The following is a 567-amino-acid chain: Urease subunit alpha (567 aa).

In terms of domain architecture, Urease spans 129 to 567; it reads GGIDAHIHFI…LPLAQLYCLF (439 aa). Ni(2+) is bound by residues histidine 134, histidine 136, and lysine 217. The residue at position 217 (lysine 217) is an N6-carboxylysine. Histidine 219 contacts substrate. Histidine 246 and histidine 272 together coordinate Ni(2+). Residue histidine 320 is the Proton donor of the active site. Aspartate 360 lines the Ni(2+) pocket.

It belongs to the metallo-dependent hydrolases superfamily. Urease alpha subunit family. As to quaternary structure, heterotrimer of UreA (gamma), UreB (beta) and UreC (alpha) subunits. Three heterotrimers associate to form the active enzyme. The cofactor is Ni cation. In terms of processing, carboxylation allows a single lysine to coordinate two nickel ions.

The protein localises to the cytoplasm. It catalyses the reaction urea + 2 H2O + H(+) = hydrogencarbonate + 2 NH4(+). It functions in the pathway nitrogen metabolism; urea degradation; CO(2) and NH(3) from urea (urease route): step 1/1. The polypeptide is Urease subunit alpha (Alteromonas mediterranea (strain DSM 17117 / CIP 110805 / LMG 28347 / Deep ecotype)).